The primary structure comprises 507 residues: Histidine ammonia-lyase (507 aa).

The segment at residues 141–143 (ASG) is a cross-link (5-imidazolinone (Ala-Gly)). Ser142 is subject to 2,3-didehydroalanine (Ser).

Belongs to the PAL/histidase family. In terms of processing, contains an active site 4-methylidene-imidazol-5-one (MIO), which is formed autocatalytically by cyclization and dehydration of residues Ala-Ser-Gly.

Its subcellular location is the cytoplasm. It catalyses the reaction L-histidine = trans-urocanate + NH4(+). The protein operates within amino-acid degradation; L-histidine degradation into L-glutamate; N-formimidoyl-L-glutamate from L-histidine: step 1/3. This is Histidine ammonia-lyase from Cereibacter sphaeroides (strain ATCC 17029 / ATH 2.4.9) (Rhodobacter sphaeroides).